Consider the following 170-residue polypeptide: MTLKKDVAVDIDSTCFRQAVALFATGIAVLSAETEEGEVHGMTVNSFTSISLDPPTVMVSLKSGRMHELLTRGGRFGVSLLGESQKVFSAFFSKRVMDDTPSPAFTIQAGLPTLRDAMAWFECEVESTVQVHDHTLFIARVSACGTPEANAPQPLLFFASRYHGKPLPLN.

The protein belongs to the non-flavoprotein flavin reductase family. Homodimer.

The catalysed reaction is a reduced flavin + NAD(+) = an oxidized flavin + NADH + 2 H(+). Its pathway is aromatic compound metabolism. Reductase component of a two-component system that catalyzes the first step in the aerobic styrene degradation pathway by enantioselective epoxidation of the vinyl side chain. Utilizes NADH to reduce FAD, which is then transferred to the styrene monooxygenase StyA. The polypeptide is NADH-dependent flavin reductase StyB (styB) (Pseudomonas fluorescens).